The following is a 146-amino-acid chain: Deoxyuridine 5'-triphosphate nucleotidohydrolase (146 aa).

Substrate is bound by residues 65–67 (RSG), Asn78, 82–84 (LID), and Met92.

Belongs to the dUTPase family. The cofactor is Mg(2+).

The catalysed reaction is dUTP + H2O = dUMP + diphosphate + H(+). It functions in the pathway pyrimidine metabolism; dUMP biosynthesis; dUMP from dCTP (dUTP route): step 2/2. Functionally, this enzyme is involved in nucleotide metabolism: it produces dUMP, the immediate precursor of thymidine nucleotides and it decreases the intracellular concentration of dUTP so that uracil cannot be incorporated into DNA. The polypeptide is Deoxyuridine 5'-triphosphate nucleotidohydrolase (Thiobacillus denitrificans (strain ATCC 25259 / T1)).